A 425-amino-acid polypeptide reads, in one-letter code: Serine--tRNA ligase (425 aa).

L-serine is bound at residue 231-233; that stretch reads TAE. 262–264 contributes to the ATP binding site; it reads RSE. L-serine is bound at residue glutamate 285. 349–352 contacts ATP; sequence EISS. Serine 385 lines the L-serine pocket.

Belongs to the class-II aminoacyl-tRNA synthetase family. Type-1 seryl-tRNA synthetase subfamily. Homodimer. The tRNA molecule binds across the dimer.

The protein resides in the cytoplasm. The catalysed reaction is tRNA(Ser) + L-serine + ATP = L-seryl-tRNA(Ser) + AMP + diphosphate + H(+). It carries out the reaction tRNA(Sec) + L-serine + ATP = L-seryl-tRNA(Sec) + AMP + diphosphate + H(+). Its pathway is aminoacyl-tRNA biosynthesis; selenocysteinyl-tRNA(Sec) biosynthesis; L-seryl-tRNA(Sec) from L-serine and tRNA(Sec): step 1/1. In terms of biological role, catalyzes the attachment of serine to tRNA(Ser). Is also able to aminoacylate tRNA(Sec) with serine, to form the misacylated tRNA L-seryl-tRNA(Sec), which will be further converted into selenocysteinyl-tRNA(Sec). The chain is Serine--tRNA ligase from Alkaliphilus oremlandii (strain OhILAs) (Clostridium oremlandii (strain OhILAs)).